The sequence spans 823 residues: Translation initiation factor IF-2 (823 aa).

Disordered regions lie at residues 30–66 and 156–192; these read VPPSLARGTSTGKSFTTVEVRSKKRRPGEYISHDDKR and TPSHSNKSGHDDRGGKKYAHGATGRHKEKEGVSIKKV. Over residues 36-48 the composition is skewed to polar residues; the sequence is RGTSTGKSFTTVE. The span at 56 to 66 shows a compositional bias: basic and acidic residues; the sequence is PGEYISHDDKR. Positions 322-491 constitute a tr-type G domain; that stretch reads PRPPVVTVMG…LLLAEMLELS (170 aa). The G1 stretch occupies residues 331-338; sequence GHVDHGKT. 331–338 serves as a coordination point for GTP; it reads GHVDHGKT. Residues 356 to 360 form a G2 region; it reads GITQH. A G3 region spans residues 377–380; that stretch reads DTPG. GTP-binding positions include 377-381 and 431-434; these read DTPGH and NKID. Residues 431 to 434 form a G4 region; that stretch reads NKID. The segment at 467–469 is G5; the sequence is SAK.

It belongs to the TRAFAC class translation factor GTPase superfamily. Classic translation factor GTPase family. IF-2 subfamily.

The protein resides in the cytoplasm. One of the essential components for the initiation of protein synthesis. Protects formylmethionyl-tRNA from spontaneous hydrolysis and promotes its binding to the 30S ribosomal subunits. Also involved in the hydrolysis of GTP during the formation of the 70S ribosomal complex. The chain is Translation initiation factor IF-2 from Anaplasma phagocytophilum (strain HZ).